The chain runs to 123 residues: Transmembrane protein 254 (123 aa).

A2 carries the post-translational modification N-acetylalanine. Transmembrane regions (helical) follow at residues 15–35 (LFWFTVITLSFGYYTWVVFWP), 61–81 (LCNGYWLAWLIHVGESLYAIV), and 95–115 (LLWFLQTFFFGIASLTILIAY).

It is found in the membrane. This is Transmembrane protein 254 (TMEM254) from Homo sapiens (Human).